The following is a 246-amino-acid chain: UDP-N-acetyl-D-mannosaminuronic acid transferase (246 aa).

This sequence belongs to the glycosyltransferase 26 family.

It carries out the reaction UDP-N-acetyl-alpha-D-mannosaminouronate + N-acetyl-alpha-D-glucosaminyl-di-trans,octa-cis-undecaprenyl diphosphate = beta-D-ManNAcA-(1-&gt;4)-alpha-D-GlcNAc-di-trans,octa-cis-undecaprenyl diphosphate + UDP + H(+). The protein operates within bacterial outer membrane biogenesis; enterobacterial common antigen biosynthesis. Functionally, catalyzes the synthesis of Und-PP-GlcNAc-ManNAcA (Lipid II), the second lipid-linked intermediate involved in enterobacterial common antigen (ECA) synthesis. This is UDP-N-acetyl-D-mannosaminuronic acid transferase from Escherichia coli O6:K15:H31 (strain 536 / UPEC).